The primary structure comprises 255 residues: tRNA pseudouridine synthase A (255 aa).

Aspartate 52 functions as the Nucleophile in the catalytic mechanism. Tyrosine 111 is a substrate binding site.

It belongs to the tRNA pseudouridine synthase TruA family. In terms of assembly, homodimer.

The catalysed reaction is uridine(38/39/40) in tRNA = pseudouridine(38/39/40) in tRNA. Formation of pseudouridine at positions 38, 39 and 40 in the anticodon stem and loop of transfer RNAs. The protein is tRNA pseudouridine synthase A of Cereibacter sphaeroides (strain ATCC 17029 / ATH 2.4.9) (Rhodobacter sphaeroides).